The sequence spans 489 residues: N-succinylglutamate 5-semialdehyde dehydrogenase (489 aa).

223–228 (GSSRTG) provides a ligand contact to NAD(+). Catalysis depends on residues Glu246 and Cys280.

It belongs to the aldehyde dehydrogenase family. AstD subfamily.

The catalysed reaction is N-succinyl-L-glutamate 5-semialdehyde + NAD(+) + H2O = N-succinyl-L-glutamate + NADH + 2 H(+). It functions in the pathway amino-acid degradation; L-arginine degradation via AST pathway; L-glutamate and succinate from L-arginine: step 4/5. In terms of biological role, catalyzes the NAD-dependent reduction of succinylglutamate semialdehyde into succinylglutamate. This chain is N-succinylglutamate 5-semialdehyde dehydrogenase, found in Aeromonas salmonicida (strain A449).